Reading from the N-terminus, the 220-residue chain is Type II restriction enzyme NspV (220 aa).

The enzyme catalyses Endonucleolytic cleavage of DNA to give specific double-stranded fragments with terminal 5'-phosphates.. Its function is as follows. A P subtype restriction enzyme that recognizes the double-stranded sequence 5'-TTCGAA-3' and cleaves after T-2. The polypeptide is Type II restriction enzyme NspV (Nostoc sp. (strain ATCC 29411 / PCC 7524)).